Here is a 546-residue protein sequence, read N- to C-terminus: Probable protein kinase UbiB (546 aa).

The 379-residue stretch at 124 to 502 (DFDIQPLASA…HVRQSQSRYL (379 aa)) folds into the Protein kinase domain. ATP contacts are provided by residues 130–138 (LASASIAQV) and Lys-153. Asp-288 acts as the Proton acceptor in catalysis. The next 2 membrane-spanning stretches (helical) occupy residues 501–521 (YLLG…VNRP) and 522–542 (EWGL…LVGW).

This sequence belongs to the ABC1 family. UbiB subfamily.

It localises to the cell inner membrane. It functions in the pathway cofactor biosynthesis; ubiquinone biosynthesis [regulation]. In terms of biological role, is probably a protein kinase regulator of UbiI activity which is involved in aerobic coenzyme Q (ubiquinone) biosynthesis. In Salmonella gallinarum (strain 287/91 / NCTC 13346), this protein is Probable protein kinase UbiB.